Here is a 220-residue protein sequence, read N- to C-terminus: GTP cyclohydrolase 1 (220 aa).

C109, H112, and C180 together coordinate Zn(2+).

It belongs to the GTP cyclohydrolase I family. In terms of assembly, toroid-shaped homodecamer, composed of two pentamers of five dimers.

The catalysed reaction is GTP + H2O = 7,8-dihydroneopterin 3'-triphosphate + formate + H(+). The protein operates within cofactor biosynthesis; 7,8-dihydroneopterin triphosphate biosynthesis; 7,8-dihydroneopterin triphosphate from GTP: step 1/1. This is GTP cyclohydrolase 1 from Yersinia enterocolitica serotype O:8 / biotype 1B (strain NCTC 13174 / 8081).